The primary structure comprises 441 residues: Serum response factor-binding protein 1 (441 aa).

2 coiled-coil regions span residues 52 to 77 (KGTE…AMKE) and 118 to 140 (LLKK…RQSA). Disordered stretches follow at residues 137 to 342 (RQSA…RNDK), 357 to 389 (FHSL…EPPV), and 406 to 441 (QTMQ…TFDD). The span at 139–152 (SAPAAESSESTSGE) shows a compositional bias: low complexity. The segment covering 153–183 (GRCKDIARSKDDARESQHPERTVVREQKAKD) has biased composition (basic and acidic residues). Lys-201 participates in a covalent cross-link: Glycyl lysine isopeptide (Lys-Gly) (interchain with G-Cter in SUMO2). The residue at position 214 (Ser-214) is a Phosphoserine. Polar residues predominate over residues 237–246 (DSNQGKASTK). Basic and acidic residues predominate over residues 269 to 282 (EKEYFDDSTEERFY). A phosphoserine mark is found at Ser-276, Ser-291, and Ser-293. Residues 308–321 (KESGVHSSAKELKP) show a composition bias toward basic and acidic residues. Lys-328 is covalently cross-linked (Glycyl lysine isopeptide (Lys-Gly) (interchain with G-Cter in SUMO2)). Residues 366-381 (SRRDPREQAPKNKAPD) show a composition bias toward basic and acidic residues.

In terms of assembly, interacts with SRF. Forms complexes with SRF and SRF cofactors ARID2, MYOCD and NKX2-5. Interacts with the N-terminus of SLC2A4. Highly expressed in heart, skeletal muscle, liver, kidney, testis and brain. Also expressed in white adipose tissue. Expression is up-regulated in cardiomyopathic heart.

The protein resides in the cytoplasm. It localises to the perinuclear region. Its function is as follows. May be involved in regulating transcriptional activation of cardiac genes during the aging process. May play a role in biosynthesis and/or processing of SLC2A4 in adipose cells. The sequence is that of Serum response factor-binding protein 1 from Mus musculus (Mouse).